Here is a 487-residue protein sequence, read N- to C-terminus: MTELFIDGAWVAGSGPVFASRNPGTDEIAWQGESASAADVDRAVASARRAFAGWSALDFESRCAIVKRFAALLNERKEAIAAAIGRETGKPLWEARTEVASMAAKVGISIQAYQERTGEKRQDMADGVAVLRHRPHGVVAVFGPYNFPGHLPNGHIVPALIAGNAVVFKPSELAPGVARATVEVWKEAGLPDGVLNLVQGEKDTGIALANHRQIDGLFFTGSSDTGTLLHKQFGGRPEIVLALEMGGNNPLVIGEVEDIDAAVHHTIQSAFLSAGQRCTCARRIFVPQGAFGDRFLARLTDVTSKITADVFDADPQPFMGAVISARAAAKLVDAQSRLIEQGAKPIIAMTQRDPRLGFVNAAIVDVTGVANLPDEEHFGPLAQIVRYATFDDAIERANDTAFGLSAGLLADDAKTWEHFRRTIRAGIVNWNRPTNGASSAAPFGGTGRSGNHRPSAYYAADYCAYPMASVESTQLTLPASLSPGLHF.

221 to 226 is an NAD(+) binding site; the sequence is GSSDTG. Residues Glu-244 and Cys-278 contribute to the active site.

The protein belongs to the aldehyde dehydrogenase family. AstD subfamily.

The enzyme catalyses N-succinyl-L-glutamate 5-semialdehyde + NAD(+) + H2O = N-succinyl-L-glutamate + NADH + 2 H(+). Its pathway is amino-acid degradation; L-arginine degradation via AST pathway; L-glutamate and succinate from L-arginine: step 4/5. In terms of biological role, catalyzes the NAD-dependent reduction of succinylglutamate semialdehyde into succinylglutamate. This is N-succinylglutamate 5-semialdehyde dehydrogenase from Burkholderia lata (strain ATCC 17760 / DSM 23089 / LMG 22485 / NCIMB 9086 / R18194 / 383).